We begin with the raw amino-acid sequence, 172 residues long: MDLNNYIASIENYPQEGITFRDISPLMADGKAYSYAVREIVQYAADKDIDMIVGPEARGFIVGCPVAYALGIGFAPVRKPGKLPREVISANYEKEYGLDTLTMHADAIKPGQRVLIVDDLLATGGTVKATIEMIEKLGGVVAGCAFLVELDGLNGRKAIEGYDTKVLMNFPG.

This sequence belongs to the purine/pyrimidine phosphoribosyltransferase family. In terms of assembly, homodimer.

It is found in the cytoplasm. It catalyses the reaction AMP + diphosphate = 5-phospho-alpha-D-ribose 1-diphosphate + adenine. The protein operates within purine metabolism; AMP biosynthesis via salvage pathway; AMP from adenine: step 1/1. Catalyzes a salvage reaction resulting in the formation of AMP, that is energically less costly than de novo synthesis. In Streptococcus agalactiae serotype Ia (strain ATCC 27591 / A909 / CDC SS700), this protein is Adenine phosphoribosyltransferase.